Reading from the N-terminus, the 373-residue chain is RNA 3'-terminal phosphate cyclase-like protein (373 aa).

The protein belongs to the RNA 3'-terminal cyclase family. Type 2 subfamily. Part of the small subunit (SSU) processome, composed of more than 70 proteins and the RNA chaperone small nucleolar RNA (snoRNA) U3. Interacts with BMS1.

It is found in the nucleus. The protein resides in the nucleolus. Functionally, as part of the small subunit (SSU) processome, it plays a role in 40S-ribosomal-subunit biogenesis in the early pre-rRNA processing steps at sites A0, A1 and A2 that are required for proper maturation of the 18S RNA. Activates BMS1 by promoting GDP/GTP exchange. Does not have cyclase activity. The chain is RNA 3'-terminal phosphate cyclase-like protein (RCL1) from Bos taurus (Bovine).